The chain runs to 53 residues: MGMSFSHLLIVLLIIFVLFGAGKLPQVMSDLAKGLKAFKNGMQDDGSDNDKNK.

Residues 1–21 (MGMSFSHLLIVLLIIFVLFGA) traverse the membrane as a helical segment.

It belongs to the TatA/E family. In terms of assembly, the Tat system comprises two distinct complexes: a TatABC complex, containing multiple copies of TatA, TatB and TatC subunits, and a separate TatA complex, containing only TatA subunits. Substrates initially bind to the TatABC complex, which probably triggers association of the separate TatA complex to form the active translocon.

The protein resides in the cell inner membrane. Functionally, part of the twin-arginine translocation (Tat) system that transports large folded proteins containing a characteristic twin-arginine motif in their signal peptide across membranes. TatA could form the protein-conducting channel of the Tat system. The protein is Sec-independent protein translocase protein TatA of Rickettsia akari (strain Hartford).